The sequence spans 220 residues: Acetate CoA-transferase subunit alpha (220 aa).

Gly24–Gly30 provides a ligand contact to CoA.

Belongs to the 3-oxoacid CoA-transferase subunit A family. In terms of assembly, heterotetramer composed of two alpha subunits (AtoD) and two beta subunits (AtoA).

Its subcellular location is the cytoplasm. The catalysed reaction is an acyl-CoA + acetate = a carboxylate + acetyl-CoA. The enzyme catalyses acetoacetate + acetyl-CoA = acetoacetyl-CoA + acetate. It catalyses the reaction butanoate + acetyl-CoA = butanoyl-CoA + acetate. It carries out the reaction acetoacetate + butanoyl-CoA = acetoacetyl-CoA + butanoate. Its pathway is lipid metabolism; short-chain fatty acid metabolism. With respect to regulation, inhibited by p-chloromercuribenzoate. Its function is as follows. Coenzyme A transferase which is involved in short-chain fatty acid degradation and catalyzes the activation of short-chain fatty acids to their respective CoA thiolesters. During acetoacetate degradation, catalyzes the transfer of CoA from acetyl-CoA to acetoacetate by a mechanism involving a covalent enzyme-CoA compound as a reaction intermediate. Utilizes a variety of short chain acyl-CoA and carboxylic acid substrates but exhibits maximal activity with normal and 3-keto substrates. This is Acetate CoA-transferase subunit alpha from Escherichia coli (strain K12).